Here is a 406-residue protein sequence, read N- to C-terminus: Type II secretion system protein F (406 aa).

Residues 1–171 (MAAFEYKALD…KMRSKLQQAM (171 aa)) are Cytoplasmic-facing. Ca(2+) contacts are provided by E97, E151, and D155. The helical transmembrane segment at 172-192 (IYPVVLVVFAVGIVAFLLAAV) threads the bilayer. Over 193-223 (VPKIVGQFVQMGQALPASTQFLLDASDFLQH) the chain is Periplasmic. A helical membrane pass occupies residues 224 to 244 (WGISLLVGLLMLIYLVRWLLT). Over 245-368 (KPDIRLRWDR…QDNSFESTVN (124 aa)) the chain is Cytoplasmic. Residues 369–389 (IALGIFTPALIALMAGMVLFI) form a helical membrane-spanning segment. Residues 390 to 406 (VMATLMPILEMNNLMSR) are Periplasmic-facing.

The protein belongs to the GSP F family. Type II secretion system is composed of four main components: the outer membrane complex, the inner membrane complex, the cytoplasmic secretion ATPase and the periplasm-spanning pseudopilus. Homodimer. Interacts with EpsE/GspE and EpsL/GspL components.

It localises to the cell inner membrane. In terms of biological role, component of the type II secretion system inner membrane complex required for the energy-dependent secretion of extracellular factors such as proteases and toxins from the periplasm. This chain is Type II secretion system protein F (epsF), found in Vibrio cholerae serotype O1 (strain ATCC 39315 / El Tor Inaba N16961).